We begin with the raw amino-acid sequence, 421 residues long: Acyl-coenzyme A thioesterase 6 (421 aa).

Active-site charge relay system residues include serine 232, aspartate 326, and histidine 360. A Peroxisome targeting signal motif is present at residues 419–421 (SKI).

It belongs to the C/M/P thioester hydrolase family.

It is found in the peroxisome. The protein resides in the cytoplasm. The enzyme catalyses pristanoyl-CoA + H2O = 2,6,10,14-tetramethylpentadecanoate + CoA + H(+). It carries out the reaction phytanoyl-CoA + H2O = 3,7,11,15-tetramethylhexadecanoate + CoA + H(+). Its pathway is lipid metabolism; fatty acid metabolism. In terms of biological role, catalyzes the hydrolysis of acyl-CoAs into free fatty acids and coenzyme A (CoASH), regulating their respective intracellular levels. Catalyzes the hydrolysis of phytanoyl-CoA and pristanoyl-CoA, two methyl-branched fatty acids derived from phytol, that enter the body via the diet. The polypeptide is Acyl-coenzyme A thioesterase 6 (Homo sapiens (Human)).